Consider the following 593-residue polypeptide: Aspartate--tRNA(Asp/Asn) ligase (593 aa).

L-aspartate is bound at residue Glu173. The segment at 197 to 200 (QLFK) is aspartate. Residue Arg219 coordinates L-aspartate. ATP-binding positions include 219–221 (RDE) and Gln228. L-aspartate is bound at residue His451. Glu485 contributes to the ATP binding site. Residue Arg492 participates in L-aspartate binding. 537-540 (GIDR) contributes to the ATP binding site.

It belongs to the class-II aminoacyl-tRNA synthetase family. Type 1 subfamily. Homodimer.

It is found in the cytoplasm. The enzyme catalyses tRNA(Asx) + L-aspartate + ATP = L-aspartyl-tRNA(Asx) + AMP + diphosphate. In terms of biological role, aspartyl-tRNA synthetase with relaxed tRNA specificity since it is able to aspartylate not only its cognate tRNA(Asp) but also tRNA(Asn). Reaction proceeds in two steps: L-aspartate is first activated by ATP to form Asp-AMP and then transferred to the acceptor end of tRNA(Asp/Asn). This chain is Aspartate--tRNA(Asp/Asn) ligase, found in Legionella pneumophila (strain Corby).